Reading from the N-terminus, the 189-residue chain is Protein GrpE (189 aa).

Residues 1–24 (MADEQTVDTQNPEANQAPEASGDD) form a disordered region.

This sequence belongs to the GrpE family. As to quaternary structure, homodimer.

Its subcellular location is the cytoplasm. Its function is as follows. Participates actively in the response to hyperosmotic and heat shock by preventing the aggregation of stress-denatured proteins, in association with DnaK and GrpE. It is the nucleotide exchange factor for DnaK and may function as a thermosensor. Unfolded proteins bind initially to DnaJ; upon interaction with the DnaJ-bound protein, DnaK hydrolyzes its bound ATP, resulting in the formation of a stable complex. GrpE releases ADP from DnaK; ATP binding to DnaK triggers the release of the substrate protein, thus completing the reaction cycle. Several rounds of ATP-dependent interactions between DnaJ, DnaK and GrpE are required for fully efficient folding. The polypeptide is Protein GrpE (Pseudomonas fluorescens (strain Pf0-1)).